The sequence spans 341 residues: Glycerol-3-phosphate dehydrogenase [NAD(P)+] 1 (341 aa).

NADPH-binding residues include S17, W18, R37, and K112. K112 and G140 together coordinate sn-glycerol 3-phosphate. Residue A144 coordinates NADPH. 5 residues coordinate sn-glycerol 3-phosphate: K195, D248, S258, R259, and N260. Residue K195 is the Proton acceptor of the active site. Residue R259 participates in NADPH binding. NADPH contacts are provided by V283 and E285.

The protein belongs to the NAD-dependent glycerol-3-phosphate dehydrogenase family.

The protein resides in the cytoplasm. The catalysed reaction is sn-glycerol 3-phosphate + NAD(+) = dihydroxyacetone phosphate + NADH + H(+). It carries out the reaction sn-glycerol 3-phosphate + NADP(+) = dihydroxyacetone phosphate + NADPH + H(+). It participates in membrane lipid metabolism; glycerophospholipid metabolism. In terms of biological role, catalyzes the reduction of the glycolytic intermediate dihydroxyacetone phosphate (DHAP) to sn-glycerol 3-phosphate (G3P), the key precursor for phospholipid synthesis. This Mycobacterium bovis (strain ATCC BAA-935 / AF2122/97) protein is Glycerol-3-phosphate dehydrogenase [NAD(P)+] 1.